The primary structure comprises 113 residues: Retrotransposon Gag-like protein 8C (113 aa).

The protein belongs to the FAM127 family.

The polypeptide is Retrotransposon Gag-like protein 8C (Homo sapiens (Human)).